The sequence spans 1158 residues: ATP-dependent helicase/deoxyribonuclease subunit B (1158 aa).

8 to 15 (GRAGTGKS) contributes to the ATP binding site. 4 residues coordinate [4Fe-4S] cluster: Cys791, Cys1112, Cys1115, and Cys1121.

Belongs to the helicase family. AddB/RexB type 1 subfamily. In terms of assembly, heterodimer of AddA and AddB. Mg(2+) is required as a cofactor. [4Fe-4S] cluster serves as cofactor.

The heterodimer acts as both an ATP-dependent DNA helicase and an ATP-dependent, dual-direction single-stranded exonuclease. Recognizes the chi site generating a DNA molecule suitable for the initiation of homologous recombination. The AddB subunit has 5' -&gt; 3' nuclease activity but not helicase activity. The sequence is that of ATP-dependent helicase/deoxyribonuclease subunit B from Clostridium perfringens (strain SM101 / Type A).